The primary structure comprises 767 residues: MENITKTFQYGGVDWLCEPWVGAGSLGIGRGENPLKFALPLLLLQISVFSIFSVSFQFLLRPFGKFAFLTQMLAGICLGPSVIGRNKQYMATFFYARSVYIIESFEAICFLFICYITTCQVDTRMIKRVGKLAFINGILLFLIPFVWGQFAAILISKRLKSGPAGIPPVEFHHVAIVQSTMFFQVVYGVLSSLKMLNTEPGRLALASMMVHDCLSWCFFMLNIAIKLNVDLPNKNRAAFLSVLQMIMILVIAYVFRPLMLWMKNRTPEGHSLKASYLSVICVLLFISCLWAEFVGLPYFFGAVVLGLATPKRPPLGTGLSDKIGCFVWSVLMPCYVIGIGLNIDLSLFSWRDVIRFELLFGVVRFAKMIAIALPSLYYKVPLWHAILVGFIVNIQGLYDVQIYKQNFNYTKISSKSFGAMVMSATVNSTIFIVIVKKLYQTMSKRNPYKRRTVQHCRVEAPLRILTCFRNREAVRPVLDLVELSRPAIGSPLSVFAVNLEELNNHSLPLLIHHTQEISPFLVPSRRDQIVKAFHNFEKTNQETVLIECFTAVAPRKTMHEDVCAIAFDQETDIVILTLDAGIELWERLLCRNLLHNCPCSVALFIDRGRLPDFRFVPLKKLTINIGAIFLGGPDDREMLAYATRLASHPSVELQVFRLVDQNGVSPLRDMVERNHDMRVINVFRKENSEKNIIFREVRIEEAVNLLDLLRKEGDDFDLMMVGIRHEENLLMLEGLSEWSDMKELGEVGDVLISKDLELSVSVLAVQQ.

The next 11 helical transmembrane spans lie at 39-59 (LPLL…FQFL), 63-83 (FGKF…PSVI), 99-119 (VYII…ITTC), 135-155 (INGI…AILI), 173-193 (HVAI…LSSL), 205-225 (LASM…NIAI), 242-262 (VLQM…MLWM), 280-300 (ICVL…PYFF), 323-343 (IGCF…GLNI), 371-391 (IALP…VGFI), and 415-435 (KSFG…IVIV).

The protein belongs to the monovalent cation:proton antiporter 2 (CPA2) transporter (TC 2.A.37) family. CHX (TC 2.A.37.4) subfamily. In terms of tissue distribution, specifically expressed in pollen.

The protein localises to the membrane. In terms of biological role, may operate as a cation/H(+) antiporter. In Arabidopsis thaliana (Mouse-ear cress), this protein is Cation/H(+) antiporter 27 (CHX27).